Reading from the N-terminus, the 279-residue chain is Pantothenate synthetase (279 aa).

26-33 (MGNLHEGH) serves as a coordination point for ATP. His-33 (proton donor) is an active-site residue. A (R)-pantoate-binding site is contributed by Gln-57. Gln-57 serves as a coordination point for beta-alanine. An ATP-binding site is contributed by 144 to 147 (GKKD). Residue Gln-150 participates in (R)-pantoate binding. ATP contacts are provided by residues Val-173 and 181 to 184 (LSSR).

Belongs to the pantothenate synthetase family. Homodimer.

Its subcellular location is the cytoplasm. It catalyses the reaction (R)-pantoate + beta-alanine + ATP = (R)-pantothenate + AMP + diphosphate + H(+). It functions in the pathway cofactor biosynthesis; (R)-pantothenate biosynthesis; (R)-pantothenate from (R)-pantoate and beta-alanine: step 1/1. Functionally, catalyzes the condensation of pantoate with beta-alanine in an ATP-dependent reaction via a pantoyl-adenylate intermediate. The polypeptide is Pantothenate synthetase (Burkholderia orbicola (strain MC0-3)).